The following is a 1311-amino-acid chain: Zinc finger protein 521 (1311 aa).

Over residues 1 to 10 (MSRRKQAKPR) the composition is skewed to basic residues. A disordered region spans residues 1-37 (MSRRKQAKPRSLKDPNCKLEDKTEDGEALDCKKRPED). The segment covering 11-21 (SLKDPNCKLED) has biased composition (basic and acidic residues). The C2H2-type 1; degenerate zinc-finger motif lies at 47–67 (HSCDSCLQVFESLSDITEHKI). The segment at 81–108 (DPTCSWPASSPSSKDQTSPSHGEGCDFG) is disordered. The span at 87 to 102 (PASSPSSKDQTSPSHG) shows a compositional bias: low complexity. C2H2-type zinc fingers lie at residues 118–140 (YPCQ…EQSH), 146–168 (FKCT…IKLH), 174–196 (YHCS…LKTH), 202–224 (YKCA…MQVH), 246–269 (QKCS…AECH), 281–304 (LQCV…EQVH), and 310–332 (NSCS…MDSH). The segment covering 349 to 358 (VGYTSVSSTT) has biased composition (low complexity). The tract at residues 349-397 (VGYTSVSSTTPDSNLSVDSSTMVEAAPPIPKSRGRKRAAQQTPDMTGPS) is disordered. Polar residues-rich tracts occupy residues 359–370 (PDSNLSVDSSTM) and 387–397 (AQQTPDMTGPS). The C2H2-type 9; degenerate zinc-finger motif lies at 405-429 (YSCIYCNKQLFSSLAVLQIHLKTMH). C2H2-type zinc fingers lie at residues 437–460 (HICQ…KQVH), 477–500 (YQCN…RCSH), and 513–536 (FFCP…RQVH). The residue at position 546 (serine 546) is a Phosphoserine. The segment at 560–585 (YSCSYCTNSPIFNSVLKLNKHIKENH) adopts a C2H2-type 13; atypical zinc-finger fold. A phosphoserine mark is found at serine 605 and serine 608. C2H2-type zinc fingers lie at residues 634–656 (YICN…LKTH), 664–686 (LTCP…VTIH), 694–717 (YICE…LDMH), 722–745 (FRCT…AVKH), 752–775 (YRCT…KHNH), 783–805 (HKCI…ITTH), and 809–832 (YNCK…REKH). The tract at residues 863-882 (TNSQESHNSHDGSEEDVDTS) is disordered. Residues 886–908 (YGCDICGAAYTMETLLQNHQLRD) form a C2H2-type 21; degenerate zinc finger. 3 C2H2-type zinc fingers span residues 930–952 (YKCN…MQTH), 959–981 (YMCP…KVTH), and 1020–1042 (FRCV…GTFH). A C2H2-type 25; degenerate zinc finger spans residues 1065-1083 (YKCASCLKEFRSKQDLVKL). A C2H2-type 26 zinc finger spans residues 1138 to 1161 (TRCSSCNVKFESESELQNHIQTIH). A Glycyl lysine isopeptide (Lys-Gly) (interchain with G-Cter in SUMO2) cross-link involves residue lysine 1146. A compositionally biased stretch (polar residues) spans 1168–1178 (SNSTQLKTPQV). Positions 1168–1188 (SNSTQLKTPQVSPMPRISPSQ) are disordered. C2H2-type zinc fingers lie at residues 1195 to 1217 (YQCI…VANH), 1225 to 1247 (HECK…LIEH), 1256 to 1279 (FKCP…FSAH), and 1286 to 1309 (YDCT…MTQH).

This sequence belongs to the krueppel C2H2-type zinc-finger protein family. In terms of assembly, interacts with EBF1. Interacts with SMAD1 and SMAD4. As to expression, predominantly expressed in hematopoietic cells. Present in organs and tissues that contain stem and progenitor cells, myeloid and/or lymphoid: placenta, spleen, lymph nodes, thymus, bone marrow and fetal liver. Within the hematopoietic system, it is abundant in CD34(+) cells but undetectable in mature peripheral blood leukocytes, and its levels rapidly decrease during the differentiation of CD34(+) cells in response to hemopoietins.

The protein localises to the nucleus. Transcription factor that can both act as an activator or a repressor depending on the context. Involved in BMP signaling and in the regulation of the immature compartment of the hematopoietic system. Associates with SMADs in response to BMP2 leading to activate transcription of BMP target genes. Acts as a transcriptional repressor via its interaction with EBF1, a transcription factor involved specification of B-cell lineage; this interaction preventing EBF1 to bind DNA and activate target genes. In Homo sapiens (Human), this protein is Zinc finger protein 521 (ZNF521).